The following is a 385-amino-acid chain: Spermidine/putrescine import ATP-binding protein PotA (385 aa).

Positions 6 to 238 constitute an ABC transporter domain; the sequence is IEFKNVSKVF…PINHFVATFI (233 aa). Residue 40–47 participates in ATP binding; the sequence is GSSGSGKS.

This sequence belongs to the ABC transporter superfamily. Spermidine/putrescine importer (TC 3.A.1.11.1) family. As to quaternary structure, the complex is composed of two ATP-binding proteins (PotA), two transmembrane proteins (PotB and PotC) and a solute-binding protein (PotD).

Its subcellular location is the cell membrane. It carries out the reaction ATP + H2O + polyamine-[polyamine-binding protein]Side 1 = ADP + phosphate + polyamineSide 2 + [polyamine-binding protein]Side 1.. In terms of biological role, part of the ABC transporter complex PotABCD involved in spermidine/putrescine import. Responsible for energy coupling to the transport system. This chain is Spermidine/putrescine import ATP-binding protein PotA, found in Streptococcus sanguinis (strain SK36).